The following is a 273-amino-acid chain: Octanoyltransferase (273 aa).

One can recognise a BPL/LPL catalytic domain in the interval 35–254 (DRVPDTCLLL…HLRDILENAE (220 aa)). Residues 73–80 (RGGKITWH), 184–186 (AIG), and 197–199 (GFA) each bind substrate. Cys-215 functions as the Acyl-thioester intermediate in the catalytic mechanism.

This sequence belongs to the LipB family.

The protein localises to the cytoplasm. It catalyses the reaction octanoyl-[ACP] + L-lysyl-[protein] = N(6)-octanoyl-L-lysyl-[protein] + holo-[ACP] + H(+). It participates in protein modification; protein lipoylation via endogenous pathway; protein N(6)-(lipoyl)lysine from octanoyl-[acyl-carrier-protein]: step 1/2. In terms of biological role, catalyzes the transfer of endogenously produced octanoic acid from octanoyl-acyl-carrier-protein onto the lipoyl domains of lipoate-dependent enzymes. Lipoyl-ACP can also act as a substrate although octanoyl-ACP is likely to be the physiological substrate. The sequence is that of Octanoyltransferase from Streptomyces griseus subsp. griseus (strain JCM 4626 / CBS 651.72 / NBRC 13350 / KCC S-0626 / ISP 5235).